We begin with the raw amino-acid sequence, 221 residues long: MSRIEAVFFDCDGTLVDSEVICSRAYVTMFQEFGITLDPEEVFKRFKGVKLYEIIDIVSLEHGVTLAKTEAEHVYRAEVARLFDSELEAIEGAGALLSAITAPMCVVSNGPNNKMQHSMGKLNMLHYFPDKLFSGYDIQRWKPDPALMFHAAKAMNVNVENCILVDDSVAGAQSGIDAGMEVFYFCADPHNKPIVHPKVTTFTHLSQLPELWKARGWDITA.

The Nucleophile role is filled by D10. Positions 10, 12, and 167 each coordinate Mg(2+). 10–12 is a binding site for substrate; it reads DCD.

It belongs to the HAD-like hydrolase superfamily. CbbY/CbbZ/Gph/YieH family. The cofactor is Mg(2+). It depends on Mn(2+) as a cofactor. Requires Co(2+) as cofactor. Zn(2+) serves as cofactor.

Its function is as follows. Catalyzes strongly the dephosphorylation of 6-phosphogluconate (6P-Glu) and slightly the dephosphorylation of dihydroxyacetone phosphate (DHAP) and phosphoenolpyruvate (PEP). Also hydrolyzes both purines (GMP and IMP) and pyrimidines as secondary substrates. The sequence is that of 6-phosphogluconate phosphatase (yieH) from Escherichia coli (strain K12).